The sequence spans 1409 residues: CRISPR-associated endonuclease Cas9 (1409 aa).

Catalysis depends on D31, which acts as the For RuvC-like nuclease domain. Residues D31, E784, and E788 each coordinate Mg(2+). The region spanning T792–L949 is the HNH Cas9-type domain. H868 acts as the Proton acceptor for HNH nuclease domain in catalysis. Residue H1011 participates in Mg(2+) binding. The span at E1121–K1130 shows a compositional bias: basic and acidic residues. The disordered stretch occupies residues E1121–L1151. Positions A1137 to N1150 are enriched in polar residues.

It belongs to the CRISPR-associated protein Cas9 family. Subtype II-A subfamily. As to quaternary structure, monomer. Binds crRNA and tracrRNA. Requires Mg(2+) as cofactor.

Its activity is regulated as follows. Only has nuclease activity when bound to both gRNAs (crRNA plus tracrRNA). CRISPR (clustered regularly interspaced short palindromic repeat) is an adaptive immune system that provides protection against mobile genetic elements (viruses, transposable elements and conjugative plasmids). CRISPR clusters contain spacers, sequences complementary to antecedent mobile elements, and target invading nucleic acids. CRISPR clusters are transcribed and processed into CRISPR RNA (crRNA). In type II CRISPR systems correct processing of pre-crRNA requires a trans-encoded small RNA (tracrRNA), endogenous ribonuclease 3 (rnc) and Cas9. The tracrRNA serves as a guide for ribonuclease 3-aided processing of pre-crRNA. Cas9/crRNA/tracrRNA endonucleolytically cleaves linear or circular dsDNA target complementary to the spacer yielding blunt ends; Cas9 is inactive in the absence of the 2 guide RNAs (gRNA). Cas9 recognizes a 3'-G-rich protospacer adjacent motif (PAM, TGGTG in this organism) in the CRISPR repeat sequences to help distinguish self versus nonself, as targets within the bacterial CRISPR locus do not have PAMs. PAM recognition is also required for catalytic activity. When the CRISPR3/cas system consisting of cas9-cas1-cas2-csn2-CRISPR3 or just cas9-CRISPR3 is expressed in E.coli it prevents plasmids homologous to spacers 1 or 2 from transforming. This Streptococcus thermophilus protein is CRISPR-associated endonuclease Cas9.